The primary structure comprises 196 residues: Probable GTP-binding protein EngB (196 aa).

The EngB-type G domain maps to 22–195; the sequence is NIPEIALVGR…WQWIEERMGK (174 aa). Residues 30–37, 57–61, 75–78, 142–145, and 174–176 contribute to the GTP site; these read GRSNVGKS, GKTQT, DVPG, TKID, and FSA. Ser37 and Thr59 together coordinate Mg(2+).

The protein belongs to the TRAFAC class TrmE-Era-EngA-EngB-Septin-like GTPase superfamily. EngB GTPase family. The cofactor is Mg(2+).

Necessary for normal cell division and for the maintenance of normal septation. In Limosilactobacillus reuteri (strain DSM 20016) (Lactobacillus reuteri), this protein is Probable GTP-binding protein EngB.